A 444-amino-acid polypeptide reads, in one-letter code: Glutamyl-tRNA(Gln) amidotransferase subunit D (444 aa).

In terms of domain architecture, Asparaginase/glutaminase spans 92–424; it reads SEIKIISTGG…EKIQNLMITN (333 aa). Residues Thr-102, Thr-178, Asp-179, and Lys-257 contribute to the active site.

It belongs to the asparaginase 1 family. GatD subfamily. As to quaternary structure, heterodimer of GatD and GatE.

The catalysed reaction is L-glutamyl-tRNA(Gln) + L-glutamine + ATP + H2O = L-glutaminyl-tRNA(Gln) + L-glutamate + ADP + phosphate + H(+). Allows the formation of correctly charged Gln-tRNA(Gln) through the transamidation of misacylated Glu-tRNA(Gln) in organisms which lack glutaminyl-tRNA synthetase. The reaction takes place in the presence of glutamine and ATP through an activated gamma-phospho-Glu-tRNA(Gln). The GatDE system is specific for glutamate and does not act on aspartate. The sequence is that of Glutamyl-tRNA(Gln) amidotransferase subunit D from Saccharolobus solfataricus (strain ATCC 35092 / DSM 1617 / JCM 11322 / P2) (Sulfolobus solfataricus).